Here is a 1088-residue protein sequence, read N- to C-terminus: RNA-directed RNA polymerase (1088 aa).

One can recognise a RdRp catalytic domain in the interval 501-687 (LSYGDVTRFL…AKRYIAGGKI (187 aa)).

The protein belongs to the reoviridae RNA-directed RNA polymerase family. Interacts with VP3 (Potential). Interacts with VP2; this interaction activates VP1. Interacts with NSP5; this interaction is probably necessary for the formation of functional virus factories. Interacts with NSP2; this interaction is weak. The cofactor is Mg(2+).

The protein resides in the virion. It catalyses the reaction RNA(n) + a ribonucleoside 5'-triphosphate = RNA(n+1) + diphosphate. In terms of biological role, RNA-directed RNA polymerase that is involved in both transcription and genome replication. Together with VP3 capping enzyme, forms an enzyme complex positioned near the channels situated at each of the five-fold vertices of the core. Following infection, the outermost layer of the virus is lost, leaving a double-layered particle (DLP) made up of the core and VP6 shell. VP1 then catalyzes the transcription of fully conservative plus-strand genomic RNAs that are extruded through the DLP's channels into the cytoplasm where they function as mRNAs for translation of viral proteins. One copy of each of the viral (+)RNAs is also recruited during core assembly, together with newly synthesized polymerase complexes and VP2. The polymerase of these novo-formed particles catalyzes the synthesis of complementary minus-strands leading to dsRNA formation. To do so, the polymerase specifically recognizes and binds 4 bases 5'-UGUG-3' in the conserved 3'-sequence of plus-strand RNA templates. VP2 presumably activates the autoinhibited VP1-RNA complex to coordinate packaging and genome replication. Once dsRNA synthesis is complete, the polymerase switches to the transcriptional mode, thus providing secondary transcription. This chain is RNA-directed RNA polymerase, found in Chlorocebus pygerythrus (Vervet monkey).